Consider the following 883-residue polypeptide: DNA double-strand break repair Rad50 ATPase (883 aa).

Residues Lys-12, 32 to 38 (NGSGKSS), and Gln-137 contribute to the ATP site. Residues 244–283 (ERYEESRTALADVEETIADVREAVAEAERERETLADRVSD) are a coiled coil. Disordered regions lie at residues 271-290 (ERER…RASD) and 305-326 (DDPD…REAV). Residues 313-326 (SAERDAVADQREAV) are compositionally biased toward basic and acidic residues. 2 coiled-coil regions span residues 336-389 (AVSR…IEAL) and 414-452 (LDDA…LDEG). One can recognise a Zinc-hook domain in the interval 407–506 (FGAAEAFLDD…RVDRGESLVA (100 aa)). Positions 454 and 457 each coordinate Zn(2+). Positions 508 to 565 (EDRVDDLEQQRERAVERRDEQADIADAKRDQAAEKRDRAADLDAEAEDARADAAAKRD) are disordered. Coiled coils occupy residues 571 to 604 (RETL…AADA) and 668 to 720 (KLQA…VTAL).

The protein belongs to the SMC family. RAD50 subfamily. In terms of assembly, homodimer. Forms a heterotetramer composed of two Mre11 subunits and two Rad50 subunits. Requires Zn(2+) as cofactor.

Functionally, part of the Rad50/Mre11 complex, which is involved in the early steps of DNA double-strand break (DSB) repair. Rad50 controls the balance between DNA end bridging and DNA resection via ATP-dependent structural rearrangements of the Rad50/Mre11 complex. The chain is DNA double-strand break repair Rad50 ATPase from Halobacterium salinarum (strain ATCC 700922 / JCM 11081 / NRC-1) (Halobacterium halobium).